A 322-amino-acid chain; its full sequence is Elongation factor P--(R)-beta-lysine ligase (322 aa).

72–74 lines the substrate pocket; it reads SPE. Residues 96–98 and N106 contribute to the ATP site; that span reads RNN. Y115 serves as a coordination point for substrate. 241–242 is a binding site for ATP; sequence EL. Residue E248 coordinates substrate. Residue G297 coordinates ATP.

This sequence belongs to the class-II aminoacyl-tRNA synthetase family. EpmA subfamily. As to quaternary structure, homodimer.

It catalyses the reaction D-beta-lysine + L-lysyl-[protein] + ATP = N(6)-((3R)-3,6-diaminohexanoyl)-L-lysyl-[protein] + AMP + diphosphate + H(+). With EpmB is involved in the beta-lysylation step of the post-translational modification of translation elongation factor P (EF-P). Catalyzes the ATP-dependent activation of (R)-beta-lysine produced by EpmB, forming a lysyl-adenylate, from which the beta-lysyl moiety is then transferred to the epsilon-amino group of a conserved specific lysine residue in EF-P. The chain is Elongation factor P--(R)-beta-lysine ligase from Buchnera aphidicola subsp. Baizongia pistaciae (strain Bp).